The following is a 481-amino-acid chain: Probable glycine dehydrogenase (decarboxylating) subunit 2 (481 aa).

The segment at 1 to 23 (MVIFEKTRGKNSPSVMPSKKGDV) is disordered. N6-(pyridoxal phosphate)lysine is present on Lys263.

The protein belongs to the GcvP family. C-terminal subunit subfamily. As to quaternary structure, the glycine cleavage system is composed of four proteins: P, T, L and H. In this organism, the P 'protein' is a heterodimer of two subunits. Pyridoxal 5'-phosphate serves as cofactor.

It catalyses the reaction N(6)-[(R)-lipoyl]-L-lysyl-[glycine-cleavage complex H protein] + glycine + H(+) = N(6)-[(R)-S(8)-aminomethyldihydrolipoyl]-L-lysyl-[glycine-cleavage complex H protein] + CO2. Its function is as follows. The glycine cleavage system catalyzes the degradation of glycine. The P protein binds the alpha-amino group of glycine through its pyridoxal phosphate cofactor; CO(2) is released and the remaining methylamine moiety is then transferred to the lipoamide cofactor of the H protein. The chain is Probable glycine dehydrogenase (decarboxylating) subunit 2 from Francisella philomiragia subsp. philomiragia (strain ATCC 25017 / CCUG 19701 / FSC 153 / O#319-036).